We begin with the raw amino-acid sequence, 385 residues long: Glucose-fructose oxidoreductase domain-containing protein 2 (385 aa).

Positions 1 to 25 (MKLLPGVGVFGTGSSARVLVPLLRA) are cleaved as a signal peptide.

Belongs to the Gfo/Idh/MocA family.

Its subcellular location is the secreted. It is found in the extracellular space. The protein localises to the extracellular matrix. Functionally, promotes matrix assembly. The chain is Glucose-fructose oxidoreductase domain-containing protein 2 (Gfod2) from Mus musculus (Mouse).